A 201-amino-acid chain; its full sequence is Glutathione peroxidase 1 (201 aa).

2 positions are modified to phosphoserine: Ser-7 and Ser-32. The active site involves Sec-47. Position 47 (Sec-47) is a non-standard amino acid, selenocysteine. 3 positions are modified to N6-acetyllysine; alternate: Lys-62, Lys-86, and Lys-112. 3 positions are modified to N6-succinyllysine; alternate: Lys-62, Lys-86, and Lys-112. Residue Lys-119 is modified to N6-acetyllysine. Residue Lys-146 is modified to N6-acetyllysine; alternate. An N6-succinyllysine; alternate modification is found at Lys-146. Ser-195 is modified (phosphoserine).

The protein belongs to the glutathione peroxidase family. As to quaternary structure, homotetramer. Interacts with MIEN1. Post-translationally, during periods of oxidative stress, Sec-47 may react with a superoxide radical, irreversibly lose hydroselenide and be converted to dehydroalanine. In terms of tissue distribution, expressed in liver, kidney, lung, brain and heart.

The protein localises to the cytoplasm. It is found in the mitochondrion. It carries out the reaction 2 glutathione + H2O2 = glutathione disulfide + 2 H2O. The catalysed reaction is a hydroperoxy polyunsaturated fatty acid + 2 glutathione = a hydroxy polyunsaturated fatty acid + glutathione disulfide + H2O. It catalyses the reaction tert-butyl hydroperoxide + 2 glutathione = tert-butanol + glutathione disulfide + H2O. The enzyme catalyses cumene hydroperoxide + 2 glutathione = 2-phenylpropan-2-ol + glutathione disulfide + H2O. It carries out the reaction (13S)-hydroperoxy-(9Z,11E)-octadecadienoate + 2 glutathione = (13S)-hydroxy-(9Z,11E)-octadecadienoate + glutathione disulfide + H2O. The catalysed reaction is (9S)-hydroperoxy-(10E,12Z)-octadecadienoate + 2 glutathione = (9S)-hydroxy-(10E,12Z)-octadecadienoate + glutathione disulfide + H2O. It catalyses the reaction (5S)-hydroperoxy-(6E,8Z,11Z,14Z)-eicosatetraenoate + 2 glutathione = (5S)-hydroxy-(6E,8Z,11Z,14Z)-eicosatetraenoate + glutathione disulfide + H2O. The enzyme catalyses (12S)-hydroperoxy-(5Z,8Z,10E,14Z)-eicosatetraenoate + 2 glutathione = (12S)-hydroxy-(5Z,8Z,10E,14Z)-eicosatetraenoate + glutathione disulfide + H2O. It carries out the reaction (12R)-hydroperoxy-(5Z,8Z,10E,14Z)-eicosatetraenoate + 2 glutathione = (12R)-hydroxy-(5Z,8Z,10E,14Z)-eicosatetraenoate + glutathione disulfide + H2O. The catalysed reaction is (15S)-hydroperoxy-(5Z,8Z,11Z,13E)-eicosatetraenoate + 2 glutathione = (15S)-hydroxy-(5Z,8Z,11Z,13E)-eicosatetraenoate + glutathione disulfide + H2O. It catalyses the reaction (5S)-hydroperoxy-(6E,8Z,11Z,14Z,17Z)-eicosapentaenoate + 2 glutathione = (5S)-hydroxy-(6E,8Z,11Z,14Z,17Z)-eicosapentaenoate + glutathione disulfide + H2O. The enzyme catalyses (12S)-hydroperoxy-(5Z,8Z,10E,14Z,17Z)-eicosapentaenoate + 2 glutathione = (12S)-hydroxy-(5Z,8Z,10E,14Z,17Z)-eicosapentaenoate + glutathione disulfide + H2O. It carries out the reaction (15S)-hydroperoxy-(5Z,8Z,11Z,13E,17Z)-eicosapentaenoate + 2 glutathione = (15S)-hydroxy-(5Z,8Z,11Z,13E,17Z)-eicosapentaenoate + glutathione disulfide + H2O. The catalysed reaction is (15S)-hydroperoxy-(11Z,13E)-eicosadienoate + 2 glutathione = (15S)-hydroxy-(11Z,13E)-eicosadienoate + glutathione disulfide + H2O. It catalyses the reaction (17S)-hydroperoxy-(4Z,7Z,10Z,13Z,15E,19Z)-docosahexaenoate + 2 glutathione = (17S)-hydroxy-(4Z,7Z,10Z,13Z,15E,19Z)-docosahexaenoate + glutathione disulfide + H2O. Its function is as follows. Catalyzes the reduction of hydroperoxides in a glutathione-dependent manner thus regulating cellular redox homeostasis. Can reduce small soluble hydroperoxides such as H2O2, cumene hydroperoxide and tert-butyl hydroperoxide, as well as several fatty acid-derived hydroperoxides. In platelets catalyzes the reduction of 12-hydroperoxyeicosatetraenoic acid, the primary product of the arachidonate 12-lipoxygenase pathway. The chain is Glutathione peroxidase 1 from Mus musculus (Mouse).